A 548-amino-acid polypeptide reads, in one-letter code: Sterol esterase TGL1 (548 aa).

The residue at position 1 (methionine 1) is an N-acetylmethionine; partial. Over 1–13 (MYFPFLGRLSITD) the chain is Lumenal. The helical transmembrane segment at 14–34 (YIIVVLVYIESIISSVLKLIP) threads the bilayer. The Cytoplasmic segment spans residues 35–548 (QPMINLFEWL…TTALDALNKE (514 aa)). The AB hydrolase-1 domain occupies 107–402 (VVYLHHGLLM…NYEHLDLIWG (296 aa)). A GXSXG motif is present at residues 199–203 (GFSQG). Serine 201 (nucleophile) is an active-site residue. Lysine 246 is covalently cross-linked (Glycyl lysine isopeptide (Lys-Gly) (interchain with G-Cter in ubiquitin)). Residues aspartate 369 and histidine 396 each act as charge relay system in the active site. Disordered stretches follow at residues 449-477 (TTHPTHGLSYRTHSADRSPLSVQADEADE) and 496-516 (IDEDNENEHQDDTEDQIHKEQ). Serine 462 and serine 466 each carry phosphoserine. Residues 502–516 (NEHQDDTEDQIHKEQ) show a composition bias toward basic and acidic residues. Phosphoserine occurs at positions 521 and 538. Positions 528-548 (KDLRQLDANSSTTALDALNKE) are disordered. The residue at position 539 (threonine 539) is a Phosphothreonine.

This sequence belongs to the AB hydrolase superfamily. Post-translationally, not N-glycosylated.

It is found in the lipid droplet. The protein resides in the membrane. The enzyme catalyses a sterol ester + H2O = a sterol + a fatty acid + H(+). Mediates the hydrolysis of steryl esters (SE). Preferentially hydrolyzes ergosteryl and zymosteryl esters. Required for mobilization of SEs from lipid particles/droplets, thereby playing a central role in lipid metabolism and sterol homeostasis. Sterol intermediates stored in SE and set free by SE hydrolases are recycled to the sterol biosynthetic pathway and converted to the final product, ergosterol, in the endoplasmic reticulum. Also has weak lipase activity toward triglycerides at neutral pH, however, the physiological relevance of this activity is unclear. The protein is Sterol esterase TGL1 (TGL1) of Saccharomyces cerevisiae (strain ATCC 204508 / S288c) (Baker's yeast).